A 171-amino-acid polypeptide reads, in one-letter code: Lipoprotein signal peptidase (171 aa).

4 consecutive transmembrane segments (helical) span residues 15 to 35, 47 to 67, 72 to 92, and 107 to 127; these read WLWL…IVMD, VLPF…SFLS, WQRW…AYWM, and ALII…GFVV. Catalysis depends on residues D128 and D146. Residues 141–161 traverse the membrane as a helical segment; the sequence is AFNLADSTICIGAAMIILDGF.

Belongs to the peptidase A8 family.

It localises to the cell inner membrane. The enzyme catalyses Release of signal peptides from bacterial membrane prolipoproteins. Hydrolyzes -Xaa-Yaa-Zaa-|-(S,diacylglyceryl)Cys-, in which Xaa is hydrophobic (preferably Leu), and Yaa (Ala or Ser) and Zaa (Gly or Ala) have small, neutral side chains.. The protein operates within protein modification; lipoprotein biosynthesis (signal peptide cleavage). In terms of biological role, this protein specifically catalyzes the removal of signal peptides from prolipoproteins. This is Lipoprotein signal peptidase from Vibrio cholerae serotype O1 (strain ATCC 39315 / El Tor Inaba N16961).